Consider the following 156-residue polypeptide: Ribonuclease 7 (156 aa).

A signal peptide spans 1–28; that stretch reads MAPARAGFCPLLLLLLLGLWVAEIPVSA. Positions 29-32 are important for antibacterial activity; sequence KPKG. The active-site Proton acceptor is the His43. Residues His43, Lys66, Asn69, and Thr70 each coordinate dUMP. 4 disulfide bridges follow: Cys51–Cys109, Cys65–Cys119, Cys83–Cys134, and Cys90–Cys97. N-linked (GlcNAc...) asparagine glycosylation is present at Asn127. The tract at residues 139 to 140 is important for antibacterial activity; it reads KK. Positions 151 and 154 each coordinate dUMP. His151 acts as the Proton donor in catalysis.

In terms of tissue distribution, expressed in collecting ducts in kidney, and in apical uroepithelium in bladder (at protein level). Expressed in various epithelial tissues including skin, respiratory tract, genito-urinary tract and, at a low level, in the gut. Expressed in liver, kidney, skeletal muscle and heart.

Its subcellular location is the secreted. Its function is as follows. Exhibits a potent RNase activity. Has broad-spectrum antimicrobial activity against many pathogenic microorganisms including uropathogenic E.coli (UPEC), and remarkably potent activity (lethal dose of 90% &lt; 30 nM) against a vancomycin resistant Enterococcus faecium. Causes loss of bacterial membrane integrity. Probably contributes to urinary tract sterility. Bactericidal activity is independent of RNase activity. The polypeptide is Ribonuclease 7 (RNASE7) (Homo sapiens (Human)).